The following is a 701-amino-acid chain: Elongation factor G (701 aa).

In terms of domain architecture, tr-type G spans 11 to 287 (TKVRNIGIMA…AVIDYLPSPL (277 aa)). Residues 20–27 (AHIDAGKT), 84–88 (DTPGH), and 138–141 (NKMD) contribute to the GTP site.

It belongs to the TRAFAC class translation factor GTPase superfamily. Classic translation factor GTPase family. EF-G/EF-2 subfamily.

It localises to the cytoplasm. Its function is as follows. Catalyzes the GTP-dependent ribosomal translocation step during translation elongation. During this step, the ribosome changes from the pre-translocational (PRE) to the post-translocational (POST) state as the newly formed A-site-bound peptidyl-tRNA and P-site-bound deacylated tRNA move to the P and E sites, respectively. Catalyzes the coordinated movement of the two tRNA molecules, the mRNA and conformational changes in the ribosome. The polypeptide is Elongation factor G (Mycobacterium leprae (strain Br4923)).